A 186-amino-acid chain; its full sequence is Putative 3-methyladenine DNA glycosylase (186 aa).

It belongs to the DNA glycosylase MPG family.

The sequence is that of Putative 3-methyladenine DNA glycosylase from Borreliella afzelii (strain PKo) (Borrelia afzelii).